The primary structure comprises 2311 residues: MKRHQFKSWIFEFREILREIKNSHYFLDSWIKFDSVGSFTHIFFHQERFMKLFDPRILSILLSRDSQDSTSNRYFTIKGVVLLVVAVLISRINNRKMVERKNLYLMGLLPIPILPIRMNSIGHRNETLEESFWSSNINRLIVSLLYLPKGKKISESCFMDPRESTWVLPINQKCIMPESNRGSRWWSNRIGKKRDSSCKISNETVAGIEISFKEKDSKYLEFLFLSYTDDRIRKDPDWELFDRLSLRKKRNIINLNSGQLFEILGKDLVCYLMSAFREKRPIEGEGFFKQQGAEATIQSNDIEHVSHLFLFSRNKWGISLQNCAQFHMWQFRQDLFVSWGKNRHESDFLRNVSRENLIWLDNVWLVNKDRFFSKVRNVSSNIQYDSTGSIFVQVTDSSQLKGSSDQSRDCFDSIRNEDSEYHKLIDQTEIQQLKERSILWDPSFSQTERTEIESDRFPKCLFGSSSMSPLFTEREKPINNHLLPEEEEIEEFLGNPTRSIRSFFSDKWSELHLGSNPTERSTRDQKFLKKKQDVSFVPSRRSENKEMVDIFKIITYLQNTVSIHPISSDPGCDMVVPKDEPDMDSSNKISFLNKNPFLDLFHLFYDRNNGGYTLRHDFESEERFQEMADLFTLSITEPDLVYHRGFAFSIDSYGLDQKKLLNRVFNSRDESKKKSLLVLPPLFYEENESFYRRIRKKSVRIYCGNYLEDPKLKIVVFASNNIMEAVNKYRLIRNMIQIQYNTYGYIRNVSNRFFLMNRSDRNYEYGIQKDQIGNDTLNHITIMKYTINQHLSNLKKSQKKWFDPLFSRTERSINLDPDAYRYKWSNGNNNFQEHLEHFVSEQGNHFQVVFDRLGINQYSIDWSKAIDKQDFSKSLRFFLSKALLFFSKSLRFFLSKTLPFFFVSIGNIPIHRSEIHIYELKGTNDQLCNQLLESIGVQIVHLNKLKPFLLDDHDTSQRPKFLINGRTILPFLFNKIPKWMIDSFHTRNNRRKSFDNTDSYFSMISHDRDNWLNPVKPFHRSSLISSFYKANRLRFLNNPHHFWFYCNKGFPFYVEKTCINNYDLTYGQFLNILFIRNKIFSLCVGKGKKTHIFLEREAILPIDSQVSDIFISNDFPKSGDETYNLYKSFHFPIRPDPFVRRAIYSIADISATPLTEEQIVHFERTSCQPFSDMNLSDSEGKNSHQYLSFNSNMGLIHTPCSEKYLPSGKRKKQSLCLKKCVDKQQMYRTFQRDSALSNLSKWNLLQTYMPWFLTSTGCKYLNFTLLDAFSDSLPILSSSPKFVSIFHDIMHGSDISWPIRQKKWWAILSQWTPISEISSKCLQNLLLSEETIHRNNESPVPLIWTHLRSTNAREFLYSILFFLLVAGYLVRIHLLFVSRASSELQTELEKIKSLMIPSYMIELRKLLYRYPTSELNSFWLKNLFRVALEQLGDSLEEIRGYASDGNMLLGRGPAYGVKSIRSKNKYLNINLIDLISIIPNPVNRITFSRNTRHLSRTSKEIYALIRKRKNVNGDWIDDKIESWVANSDSIDDDEREFLVQFSTLTTEKRIDQILLSLTHSDHLSKNDFGYQMIEQPGSIYLRYLVDIHKKSLMNYEFNRSCLAERRIFLAHYQTITYSQTSCGANSFHFRSHGKPFSLRLALSPSRGILVIGSIGTGRSYLVKYLATNSYVPFITVFPNKFLDDKPKGYLIDDIDDSNDIDLDDTDDIDIEDSDDIDNDLETELLTMTNVLTMYMTSKIDRFDITPQFELAKAMSPCIIWIPNIHDLYVNESNYLSLGLLVNYLSRDCERSSTRNILVIASTHIPQKVDPALIAPNKSNTCIKIRRLLIPQQRKHFFILSYTRGFHLEKKMFHTNGFGSITVGSNARDLVALINEALSISITQKKSIIETNTIRSALHRQTWDLRSQVRSVQDHGILFYQIGRAVAQNVLLSNCPIDPISIYMKKKSCKERDSYLYKWYFELGTSIKKLTILLYLLSCSAGSVAQDLWSPSGPDEKNGITSFGFVENDSDLVHGLLEVEGALVGFSRKEKDCSQFDNNRVTLLLRSEPRNPLDMMQNGSCSIVDQRFLYEKYESEFEEGEGALDPQQIEEDLLNHIVWAPRIWRPCGNLFDCIERTNELGFPYWARSFRDKRIIFHKENELQQKDSEFLQSGTMQYQTRDRSSKEQGFFRISQFIWDPADPFFFLFKDQPFVSVFSRREFFADEEMSKGLITSQKNPPTSIYKRWFIKNTQEKHFELLIHRQRWLRTNSSLSNRSFCSNTLSESYQYLSNLFLSNGRLLDQMTKTLLRKRWLFPDEMKHLIDVTGKRFPIP.

Position 1652 to 1659 (1652 to 1659 (GSIGTGRS)) interacts with ATP.

It belongs to the Ycf2 family.

Its subcellular location is the plastid. It localises to the chloroplast stroma. Its function is as follows. Probable ATPase of unknown function. Its presence in a non-photosynthetic plant (Epifagus virginiana) and experiments in tobacco indicate that it has an essential function which is probably not related to photosynthesis. The sequence is that of Protein Ycf2 from Lemna minor (Common duckweed).